Consider the following 75-residue polypeptide: MKFLALFVTLLVVLALVSAQKSQNTNHNVIVIGAKKPGAAPAAAAAAAPAAPPAAAPAAAPAAPEAGLADAPAES.

A signal peptide spans 1–19; sequence MKFLALFVTLLVVLALVSA. Residues 55–75 are disordered; sequence AAPAAAPAAPEAGLADAPAES. Positions 56-75 are enriched in low complexity; the sequence is APAAAPAAPEAGLADAPAES.

As to expression, lumen fluid of male accessory glands, becomes seminal fluid.

It is found in the secreted. Its function is as follows. Transferred from male to female during mating and may affect egglaying and behavior after mating. This chain is Accessory gland-specific peptide 57Da (Mst57Da), found in Drosophila melanogaster (Fruit fly).